We begin with the raw amino-acid sequence, 307 residues long: Actin maturation protease (307 aa).

The interval 1–34 (MSLENDAAAPPPPPLPPPPPPQPPSLARSESSKK) is disordered. The segment covering 9-24 (APPPPPLPPPPPPQPP) has biased composition (pro residues). Residues 80–200 (SLIQDGPQCG…WAVASGILLG (121 aa)) are peptidase C39-like. The active site involves C88.

This sequence belongs to the ACTMAP family.

The protein resides in the cytoplasm. It catalyses the reaction N-terminal N(alpha)-acetyl-L-methionyl-L-aspartyl-[protein] + H2O = N-terminal L-aspartyl-[protein] + N-acetyl-L-methionine. It carries out the reaction N-terminal N(alpha)-acetyl-L-methionyl-L-glutamyl-[protein] + H2O = N-terminal L-glutamyl-[protein] + N-acetyl-L-methionine. The enzyme catalyses N-terminal N(alpha)-acetyl-L-cysteinyl-L-aspartyl-[protein] + H2O = N-terminal L-aspartyl-[protein] + N-acetyl-L-cysteine. The catalysed reaction is N-terminal N(alpha)-acetyl-L-cysteinyl-L-glutamyl-[protein] + H2O = N-terminal L-glutamyl-[protein] + N-acetyl-L-cysteine. In terms of biological role, actin maturation protease that specifically mediates the cleavage of immature acetylated N-terminal actin, thereby contributing to actin maturation. Cleaves N-terminal acetylated methionine of immature cytoplasmic actin after translation. Cleaves N-terminal acetylated cysteine of muscle actin after canonical removal of N-terminal methionine. In Danio rerio (Zebrafish), this protein is Actin maturation protease.